Consider the following 130-residue polypeptide: Small ribosomal subunit protein bS16 (130 aa).

A compositionally biased stretch (basic and acidic residues) spans 98–109 (AAAKQAAKDAAE). A disordered region spans residues 98–130 (AAAKQAAKDAAEAKAAAAAEAEAPAADAEASEG). The span at 110–130 (AKAAAAAEAEAPAADAEASEG) shows a compositional bias: low complexity.

The protein belongs to the bacterial ribosomal protein bS16 family.

The protein is Small ribosomal subunit protein bS16 of Synechococcus sp. (strain CC9902).